An 89-amino-acid chain; its full sequence is Phosphocarrier protein HPr (89 aa).

Positions 2–89 (AKFSAIITDK…TMIDTALIQG (88 aa)) constitute an HPr domain. Histidine 15 (pros-phosphohistidine intermediate) is an active-site residue. At serine 46 the chain carries Phosphoserine; by HPrK/P.

It belongs to the HPr family.

It is found in the cytoplasm. With respect to regulation, phosphorylation on Ser-46 inhibits the phosphoryl transfer from enzyme I to HPr. Functionally, general (non sugar-specific) component of the phosphoenolpyruvate-dependent sugar phosphotransferase system (sugar PTS). This major carbohydrate active-transport system catalyzes the phosphorylation of incoming sugar substrates concomitantly with their translocation across the cell membrane. The phosphoryl group from phosphoenolpyruvate (PEP) is transferred to the phosphoryl carrier protein HPr by enzyme I. Phospho-HPr then transfers it to the PTS EIIA domain. Its function is as follows. P-Ser-HPr interacts with the catabolite control protein A (CcpA), forming a complex that binds to DNA at the catabolite response elements cre, operator sites preceding a large number of catabolite-regulated genes. Thus, P-Ser-HPr is a corepressor in carbon catabolite repression (CCR), a mechanism that allows bacteria to coordinate and optimize the utilization of available carbon sources. P-Ser-HPr also plays a role in inducer exclusion, in which it probably interacts with several non-PTS permeases and inhibits their transport activity. In Mycoplasma capricolum subsp. capricolum (strain California kid / ATCC 27343 / NCTC 10154), this protein is Phosphocarrier protein HPr (ptsH).